Reading from the N-terminus, the 18141-residue chain is Titin (18141 aa).

Over residues 1–31 (MQRQNPNPYQQQNQQHQQVQQFSSQEYSHSS) the composition is skewed to low complexity. The segment at 1–69 (MQRQNPNPYQ…QHHGGSIGGA (69 aa)) is disordered. A compositionally biased stretch (basic and acidic residues) spans 32–47 (QEQHQEQRISRTEQHV). Positions 48–62 (QRSQVTTQRQVQQHH) are enriched in low complexity. Ig-like domains lie at 86–177 (PPVF…VYIQ), 255–343 (PQIS…AVLA), 372–461 (PAFV…AQLN), 471–559 (PQFV…ARLY), 618–708 (PQFI…AILS), 751–842 (PQFI…SSIR), 890–981 (PQFK…AQLT), 1024–1115 (PRFL…ATMI), 1158–1249 (PVFV…ACVR), 1291–1381 (PQFT…CSVR), 1424–1515 (PRFL…VELQ), 1558–1643 (PVFT…EAIT), 1691–1781 (PVFT…ASLI), 1824–1917 (PVFV…LNVT), 1958–2050 (PQFG…VNVT), 2089–2180 (PIFL…CNVR), and 2222–2313 (PHFT…TNLR). The disordered stretch occupies residues 236-266 (EQDSQLSQELDRNQGPAQAPQISQKPRSSKL). C393 and C445 are disulfide-bonded. Disulfide bonds link C1312/C1365, C1446/C1499, and C1579/C1632. C1846 and C1899 are joined by a disulfide. C2111 and C2164 are oxidised to a cystine. The segment covering 2338-2347 (STAPHQRQEP) has biased composition (basic and acidic residues). The segment at 2338–2357 (STAPHQRQEPETPGTRQRPV) is disordered. 3 Ig-like domains span residues 2356 to 2449 (PVFT…MRVV), 2488 to 2581 (PIFT…MKVK), and 2622 to 2715 (PVFT…LKIE). The segment at 2731 to 2750 (PRIGELEAPKEGRPEAPEPT) is disordered. Over residues 2734–2746 (GELEAPKEGRPEA) the composition is skewed to basic and acidic residues. Ig-like domains are found at residues 2754 to 2844 (PVFI…GTLK), 2891 to 2983 (PPVW…TTIF), 3029 to 3116 (PRFT…AEIS), 3130 to 3221 (PRFT…TTLN), 3263 to 3354 (PKFI…ASLK), 3401 to 3494 (PVFT…MKIQ), 3539 to 3625 (PEFI…ATVS), 3676 to 3767 (PKFT…AKVT), and 3811 to 3901 (PKFT…ATVS). C2775 and C2828 are disulfide-bonded. The cysteines at positions 3152 and 3205 are disulfide-linked. 3 cysteine pairs are disulfide-bonded: C3560-C3613, C3698-C3751, and C3832-C3885. One copy of the TPR 1 repeat lies at 3910-3944 (LQNQVPRGMKRSDALTQMEATIKKYTSEVHLTEDD). Ig-like domains follow at residues 3954–4047 (PRFV…IKVS) and 4092–4181 (PVFV…LKVV). An intrachain disulfide couples C3976 to C4029. Residues 4204 to 4229 (AAYQKERQENELEKVFDERKQVLSEQ) adopt a coiled-coil conformation. 2 disordered regions span residues 4226 to 4254 (LSEQ…DWQQ) and 4299 to 4336 (SSQA…PSES). The span at 4309 to 4322 (YEENLQEKTSTTEV) shows a compositional bias: polar residues. 4 consecutive Ig-like domains span residues 4394–4482 (PVFT…ANLV), 4497–4585 (PSFV…GDCI), 4604–4692 (PHIV…AQLK), and 4703–4791 (PTIT…AKLT). The stretch at 4403–4438 (CRVFENEQAKFEVEFEGEPNPTVKWYRESFPIQNSP) is one TPR 2 repeat. The cysteines at positions 4625 and 4676 are disulfide-linked. Disordered stretches follow at residues 4803 to 4891 (RTID…DKGV), 5318 to 5368 (DELV…QPEP), 5413 to 5648 (RVIP…EVDA), 5667 to 5701 (IKKT…VPQK), 5718 to 5748 (KKTK…EVVQ), 5775 to 5982 (KEEE…QRLL), 6034 to 6350 (KRVK…MPVD), and 6364 to 6393 (EEEV…EASV). A compositionally biased stretch (low complexity) spans 4822-4841 (PESPHAFQPGQQPGQQFGQF). The span at 4852 to 4863 (GRSRQKKPKVRS) shows a compositional bias: basic residues. Composition is skewed to basic and acidic residues over residues 5344-5357 (QPQE…HDEL), 5436-5447 (RPKEAVKAEEIQ), 5541-5552 (QKPDEQKQELPK), 5591-5621 (IEEK…EKPE), and 5633-5645 (PKSE…HPDE). Residues 5575–5613 (PVLWERKKKKPQPQDVIEEKLDVAPTKTYEKAVDVLPDE) form a TPR 3 repeat. Positions 5681–5697 (EELFEEQPEEEISPEEE) are enriched in acidic residues. Composition is skewed to acidic residues over residues 5779–5792 (IPTE…ETAE) and 5818–5860 (DVEE…QDEI). Positions 5865 to 5874 (RKVKKAKKPK) are enriched in basic residues. Positions 5883-5904 (EIEEDQPEEEVLQEEIIGEQEE) are enriched in acidic residues. Residues 5910 to 5920 (RKVKSIKKPKK) are compositionally biased toward basic residues. Positions 5921-5971 (VVTEKTVDQTEQPEKPEESQAEEVKETVTEEPKKPKPAPEEAKVEQVEKIS) are enriched in basic and acidic residues. A compositionally biased stretch (basic residues) spans 6034 to 6043 (KRVKKKKPKT). Acidic residues predominate over residues 6049-6079 (ESTEEPAEETEEFEEEATQPEEVQPVEEIPE). Basic and acidic residues-rich tracts occupy residues 6081–6092 (PQVKEVADERKT), 6099–6133 (RKEE…EVRL), 6141–6169 (IKPE…EEKR), 6195–6209 (EAEH…KPEE), 6217–6234 (KRGE…EKKW), and 6259–6268 (PIEEQQKPEK). Over residues 6281-6290 (PESEEEELEL) the composition is skewed to acidic residues. The segment covering 6291 to 6306 (EPLKLPEDKKPKEPKA) has biased composition (basic and acidic residues). Over residues 6307–6318 (KKEKKKKPKLKK) the composition is skewed to basic residues. Composition is skewed to acidic residues over residues 6325 to 6349 (EVSE…EMPV) and 6364 to 6373 (EEEVVPTEET). 7 consecutive Ig-like domains span residues 6536–6624 (PRIT…TNII), 6633–6728 (PQFT…NILS), 6741–6830 (PTVT…VVVS), 6841–6929 (PRFI…ATVN), 6942–7034 (PRFV…VKIQ), 7066–7151 (PKII…VAVT), and 7189–7279 (PSLL…FDIS). C6557 and C6608 are joined by a disulfide. An intrachain disulfide couples C6964 to C7016. Positions 7621–7663 (KIQVQTKQIAQMNTKIKKHKKHKQQEQEVSETTIQCEQKETLA) form a coiled coil. Disordered regions lie at residues 7773–7793 (AKTA…VKAQ), 9414–9440 (EEDD…EEIQ), 9485–9510 (EEDD…PEEI), 9556–9582 (EEDD…EEIQ), 9627–9652 (EEDD…PEEI), 9698–9724 (EEDD…EEIQ), 9769–9796 (EEDD…EIQE), 9838–9865 (TAEE…PEEI), 9911–9937 (EEDD…EEIQ), 9982–10008 (EEDD…EEIQ), 10053–10080 (EEDD…EIQE), 10125–10149 (ENDK…PEEI), 10195–10220 (EEDD…PEEI), 10266–10291 (EEDD…PEEI), 10337–10364 (EEDD…EIQE), 10408–10433 (EEDD…PEEI), 10479–10504 (EEDD…PEEI), 10550–10576 (EEDD…EEIQ), 10621–10648 (EEDD…EIQE), 10692–10717 (EEDD…PEEI), 10763–10788 (EEDD…PEEI), 10834–10860 (EEDD…EEIQ), 10905–10932 (EEDD…EIQE), 11047–11073 (EEDD…EEIQ), 11118–11143 (EEDD…PEEI), 11189–11216 (EEDD…EIQE), 11260–11286 (EEDD…EEIQ), 11679–11703 (EELD…RGPD), and 11767–11795 (TEPE…LETP). Positions 7774-7783 (KTAESSKELP) are enriched in basic and acidic residues. Composition is skewed to acidic residues over residues 9429–9440 (VPYEEEKPEEIQ), 9500–9510 (VPYEEEKPEEI), 9571–9582 (VPYEEEKPEEIQ), 9642–9652 (VPYEEEKPEEI), 9713–9724 (VPYEEEKPEEIQ), 9784–9796 (VPYE…EIQE), 9855–9865 (VPYEEEKPEEI), 9926–9937 (VPYEEEKPEEIQ), 9997–10008 (VPYEEEKPEEIQ), 10068–10080 (VPYE…EIQE), 10139–10149 (VPYEEEKPEEI), 10210–10220 (VPYEEEKPEEI), 10281–10291 (VPYEEEKPEEI), 10352–10364 (VPYE…EIQE), 10423–10433 (VPYEEEKPEEI), 10494–10504 (VPYEEEKPEEI), 10565–10576 (VPYEEEKPEEIQ), 10636–10648 (VPYE…EIQE), 10707–10717 (VPYEEEKPEEI), 10778–10788 (VPYEEEKPEEI), 10849–10860 (VPYEEEKPEEIQ), 10920–10932 (VPYE…EIQE), 11062–11073 (VPYEEEKPEEIQ), 11133–11143 (VPYEEEKPEEI), 11204–11216 (VPYE…EIQE), and 11275–11286 (VPYEEEKPEEIQ). Positions 11686-11699 (KPKKKTTKTRTFKK) are enriched in basic residues. Positions 11780-11792 (PTKDKTPKQKKTL) are enriched in basic and acidic residues. One copy of the TPR 4 repeat lies at 11872–11905 (KTVLQPYQRTEMELPQRARRDSSFKQPVKLTPMK). Disordered stretches follow at residues 12003–12201 (FKHS…ADTK), 12451–12471 (TLQV…KKPE), 12685–12767 (TVDD…LPGP), 12943–12971 (IDHE…KEKS), 13131–13154 (IKKK…ETRP), 13325–13349 (QSFE…KPKK), 13471–13492 (EEYE…KSHN), 13554–13576 (EADK…PLKK), 13702–13792 (KVQK…KSPD), 13891–13914 (EEVQ…KAKK), 13951–13994 (MKRK…DEPK), 14073–14094 (TTVP…RTKK), 14109–14322 (EEEA…QVTT), 14354–14377 (EYEP…RKVK), 14414–14448 (PLDS…ETPV), 14533–14566 (EPEI…KVKK), 14583–14720 (KVDL…SELP), and 14756–14789 (VEES…KSKK). Composition is skewed to basic and acidic residues over residues 12022–12035 (ESDH…ELLH), 12044–12054 (EKIETPDESRK), 12124–12134 (MERTSDIREES), 12183–12201 (LNLR…ADTK), 12457–12471 (TEHE…KKPE), and 12685–12709 (TVDD…KISE). Acidic residues predominate over residues 12731–12741 (HDEDLQTDEYS). The span at 12750 to 12760 (KSKKKSTKKQK) shows a compositional bias: basic residues. Residues 13141 to 13154 (GPKEQVFEITETRP) show a composition bias toward basic and acidic residues. A compositionally biased stretch (basic residues) spans 13482-13492 (KKPKKKVKSHN). A TPR 5 repeat occupies 13566-13599 (QPIKKEKPLKKKKDVEYPVSLEAFDHTVKVVSEP). Residues 13733–13747 (LVKEDLDQPIERALE) show a composition bias toward basic and acidic residues. Residues 13771 to 13781 (PKPKKISKPKS) are compositionally biased toward basic residues. 2 stretches are compositionally biased toward basic and acidic residues: residues 13893–13906 (VQEK…EKKA) and 13975–13984 (EDKPVEKISE). The segment covering 14221 to 14240 (TVEKPLEALHTDSDLEKPDV) has biased composition (basic and acidic residues). The segment covering 14264–14274 (KISSEQPKQPS) has biased composition (low complexity). Residues 14282–14294 (VTEHDLKPEEEKP) show a composition bias toward basic and acidic residues. Residues 14542-14554 (IEEHPEQSKEKLA) show a composition bias toward basic and acidic residues. Residues 14555 to 14564 (PKPKKTVRKV) show a composition bias toward basic residues. A compositionally biased stretch (basic and acidic residues) spans 14583–14599 (KVDLEKYEKVEMPEKPV). The segment covering 14652-14662 (ETTVDTTDIPE) has biased composition (low complexity). Residues 14664–14683 (TPTQTAQPEDTATAQITPSA) show a composition bias toward polar residues. Positions 14684–14697 (QEEKSTQDDTKDTI) are enriched in basic and acidic residues. Positions 14756 to 14771 (VEESQPIVEEVEDEEP) are enriched in acidic residues. The stretch at 14904–14936 (IPKTTDIGAIKDNGELSRNIEEAEEILKFKPHK) is one TPR 6 repeat. 8 disordered regions span residues 14956–15208 (EKYI…VSVK), 15301–15329 (TRKK…IQPD), 15425–15448 (ISET…ETPK), 15578–15597 (IRVS…QFTV), 15697–15722 (EKPA…PKPE), 15825–15876 (EEPK…VEEP), 15951–15973 (ESQP…KAPI), and 16181–16206 (QEEE…KPLQ). 10 stretches are compositionally biased toward basic and acidic residues: residues 14967–14989 (EKTP…DVKL), 15024–15046 (ELKQ…KDGE), 15069–15080 (QIEHPEIPEKVK), 15088–15097 (KPKDKSKSEP), 15109–15139 (PKEE…EIKL), 15169–15179 (IEDKAIDDEKK), 15189–15198 (QPKEQEIAKE), 15316–15325 (VTLKEPKEEQ), 15425–15437 (ISET…KPIE), and 15578–15589 (IRVSESEPKPEE). Acidic residues predominate over residues 15703–15716 (IVEEEEPVVTEPIE). Positions 15951-15964 (ESQPEAVEDKEVSL) are enriched in basic and acidic residues. The segment covering 16183-16193 (EEYEEGEDIEE) has biased composition (acidic residues). The SH3 domain occupies 16409-16470 (ENLNIMYSIC…PAQYLMEPEE (62 aa)). Ig-like domains follow at residues 16501–16590 (PRFI…TELI), 16625–16719 (PTFS…ITLK), 16728–16811 (PQIL…ANLT), 16822–16916 (PPLF…VEVD), 16919–17001 (TFTK…STVE), 17007–17091 (PDFI…CELV), 17097–17180 (PEIV…AKLT), 17184–17270 (PLVD…TKLC), and 17277–17363 (PPVI…AEAS). Cysteines 16940 and 16989 form a disulfide. A Fibronectin type-III 1 domain is found at 17374–17467 (APGTPQPLEI…LSPPIRLVPK (94 aa)). 2 consecutive Ig-like domains span residues 17473–17558 (PSVQ…CRLK) and 17563–17653 (PVLE…CTVQ). Cysteines 17494 and 17542 form a disulfide. 4 consecutive Fibronectin type-III domains span residues 17660 to 17755 (RPQS…TKKF), 17760 to 17861 (PPRG…TPPS), 17862 to 17958 (PPQN…THAS), and 17982 to 18078 (PPTG…AMTA). Residues 17694-17728 (LEKCDVQNNVWMKVSDFNKDIKSYAVQKLSMNAQY) form a TPR 7 repeat. Positions 17741 to 17771 (SEPTESDPVTITKKFEKPSPPRGPTTVSGMN) are disordered.

Belongs to the protein kinase superfamily. CAMK Ser/Thr protein kinase family. In terms of assembly, interacts with Msp300; this interaction mediates the recruitment of Msp300 to the Z-disks. Expressed in the mesoderm at stage 11, several hours before myoblast fusion, and persists in most muscle cells, somatic, visceral and pharyngeal muscles and their precursors, until the third instar. Isoform A: Expressed in the indirect flight muscle (at protein level).

Its subcellular location is the cytoplasm. The protein localises to the nucleus. It is found in the chromosome. It localises to the myofibril. The protein resides in the sarcomere. Its subcellular location is the z line. Functionally, key component in the assembly and functioning of adult and embryonic striated muscles and muscle tendons. By providing connections at the level of individual microfilaments, it contributes to the fine balance of forces between the two halves of the sarcomere. The size and extensibility of the cross-links are the main determinants of sarcomere extensibility properties of muscle. In non-muscle cells, seems to play a role in chromosome condensation and chromosome segregation during mitosis. Might link the lamina network to chromatin or nuclear actin, or both during interphase. This Drosophila melanogaster (Fruit fly) protein is Titin (sls).